The following is a 324-amino-acid chain: Zinc transporter ZIP1 (324 aa).

Over 1-30 (MGPWGEPELLVWRPEAVASEPPVPVGLEVK) the chain is Extracellular. A helical transmembrane segment spans residues 31-51 (LGALVLLLVLTLLCSLVPICV). Residues 52-68 (LRRPGANHEGSASRQKA) are Cytoplasmic-facing. The chain crosses the membrane as a helical span at residues 69–89 (LSLVSCFAGGVFLATCLLDLL). Over 90 to 104 (PDYLAAIDEALAALH) the chain is Extracellular. The helical transmembrane segment at 105–125 (VTLQFPLQEFILAMGFFLVLV) threads the bilayer. Topologically, residues 126–179 (MEQITLAYKEQSGPSPLEETRALLGTVNGGPQHWHDGPGVPQASGAPATPSALR) are cytoplasmic. The chain crosses the membrane as a helical span at residues 180 to 200 (ACVLVFSLALHSVFEGLAVGL). The Extracellular segment spans residues 201 to 206 (QRDRAR). The helical transmembrane segment at 207-227 (AMELCLALLLHKGILAVSLSL) threads the bilayer. Residues 228-237 (RLLQSHLRAQ) are Cytoplasmic-facing. Residues 238–258 (VVAGCGILFSCMTPLGIGLGA) traverse the membrane as a helical segment. The Extracellular portion of the chain corresponds to 259–272 (ALAESAGPLHQLAQ). The helical transmembrane segment at 273 to 293 (SVLEGMAAGTFLYITFLEILP) threads the bilayer. At 294 to 303 (QELASSEQRI) the chain is on the cytoplasmic side. A helical transmembrane segment spans residues 304-324 (LKVILLLAGFALLTGLLFIQI).

This sequence belongs to the ZIP transporter (TC 2.A.5) family. In terms of tissue distribution, ubiquitous. Expressed in most adult and fetal tissues including the epidermis.

Its subcellular location is the cell membrane. It is found in the endoplasmic reticulum membrane. It carries out the reaction Zn(2+)(in) = Zn(2+)(out). Inhibited by Ni(2+) ions. Fe(2+) ions do not inhibit zinc uptake. In terms of biological role, transporter for the divalent cation Zn(2+). Mediates the influx of Zn(2+) into cells from extracellular space. Functions as the major importer of zinc from circulating blood plasma into prostate cells. This is Zinc transporter ZIP1 from Homo sapiens (Human).